A 931-amino-acid polypeptide reads, in one-letter code: MRHSIGLAAALLAPTLPVALGQHIRDLSSEKWTLSSRALNRTVPAQFPSQVHLDLLRAGVIGEYHGLNDFNLRWIAAANWTYTSQPIKGLLDNYGSTWLVFDGLDTFATISILWTANRIHGQSVSPVSGSMYLPALEACQRRILIRKVSFRGGVTAEVNTCYLHIEWPDDVQLTYEYPNRWFMRKEQSDFGWDWGPAFAPAGPWKPAYIVQLDKKESVYVLNTDLDIYRKNQINYLPPDQSQPWVVNASIDILGPLPAKPTMSIEVRDTHSGTILTSRTLNNVSVAGNAITGVTVLDGLNPKLWWPQSSVIRTSTMFLSLSKVEGTRPWPVWTNGRASAPFFLNQRNITEVQRAQGIAPGANWHFEVNGHEFYAKGSNLIPPDSFWTRVTEERISRLFDAVVVGNQNMLRVWSSGAYLHDYIYDLADEKGILLWSEFEFSDALYPSDDAFLENVAAEIVYNVRRVNHHPSLALWAGGNEIESLMLPRVKDAAPSSYSYYVGEYEKMYISLFLPLVYENTRSISYSPSSTTEGYLYIDLSAPVPMAERYDNTTSGSYYGDTDHYDYDTSVAFDYGSYPVGRFANEFGFHSMPSLQTWQQAVDTEDLYFNSSVVMLRNHHDPAGGLMTDNYANSATGMGEMTMGVISYYPIPSKSDHISNFSAWCHATQLFQADMYKSQIQFYRRGSGMPERQLGSLYWQLEDIWQAPSWAGIEYGGRWKVLHHVMRDIYQPVIVSPFWNYTTGSLDVYVTSDLWSPAAGTVDLTWLDLSGRPIAGNAGTPKSVPFTVGGLNSTRIYGTNVSSLGLPDTKDAVLILSLSAHGRLPNSDRTTNLTHENYATLSWPKDLKIVDPGLKLGYSSKKTTVTVEATSGVSLYTWLDYPEGVVGYFEENAFVLAPGEKKEIGFTVLDDTTNGAWVRNITVQSLWDQKVRG.

Positions 1–21 are cleaved as a signal peptide; it reads MRHSIGLAAALLAPTLPVALG. Residues Asn-40, Asn-79, Asn-247, Asn-282, and Asn-347 are each glycosylated (N-linked (GlcNAc...) asparagine). The active-site Proton donor is the Glu-479. 8 N-linked (GlcNAc...) asparagine glycosylation sites follow: Asn-550, Asn-608, Asn-658, Asn-738, Asn-790, Asn-798, Asn-830, and Asn-918.

It belongs to the glycosyl hydrolase 2 family. Beta-mannosidase A subfamily. Homodimer. N-glycosylated.

It is found in the secreted. The enzyme catalyses Hydrolysis of terminal, non-reducing beta-D-mannose residues in beta-D-mannosides.. Its pathway is glycan metabolism; N-glycan degradation. Functionally, exoglycosidase that cleaves the single beta-linked mannose residue from the non-reducing end of beta-mannosidic oligosaccharides of various complexity and length. Involved in the degradation of polymeric mannan and galactomannan. Releases the terminal mannose residue from mannobiose and mannotriose, as well as from galactosyl-mannobiose (GM2), galactosyl-mannotriose (GM3) and di-galactosyl-mannopentaose (G2M5). This chain is Beta-mannosidase A (mndA), found in Aspergillus niger.